Consider the following 171-residue polypeptide: UPF0098 protein aq_1250 (171 aa).

The protein belongs to the UPF0098 family.

The chain is UPF0098 protein aq_1250 from Aquifex aeolicus (strain VF5).